The following is a 285-amino-acid chain: Iron uptake system component EfeM (285 aa).

The first 34 residues, 1-34 (MTYPLLTRKTLMKKTPLALLLTLGLLQTPLAAFA), serve as a signal peptide directing secretion.

It belongs to the EfeM/EfeO family. In terms of assembly, component of the iron transporter efeUOB/M complex composed of EfeU, EfeM and EfeB.

It localises to the periplasm. In terms of biological role, part of the iron transporter system efeUOB/M involved in iron import. Specifically binds Fe(3+), which is produced by EfeB-mediated oxidation of Fe(2+), and delivers it to the cell inner membrane permease EfeU. Also binds Zn(2+) and Cu(2+) in vitro. The polypeptide is Iron uptake system component EfeM (Pseudomonas syringae pv. syringae (strain B728a)).